Reading from the N-terminus, the 122-residue chain is MARIAGVDLPRNKRVEIGLTYIYGIGRSTSNKILKVTGIDPDTRVKDLTEAEIAKLREEVDKYQVEGDLRREIRANIKRLMDIGCYRGIRHRKNLPVRGQRTRTNARTRKGPKKTVGVRRAK.

The interval 96–122 (PVRGQRTRTNARTRKGPKKTVGVRRAK) is disordered.

It belongs to the universal ribosomal protein uS13 family. In terms of assembly, part of the 30S ribosomal subunit. Forms a loose heterodimer with protein S19. Forms two bridges to the 50S subunit in the 70S ribosome.

Functionally, located at the top of the head of the 30S subunit, it contacts several helices of the 16S rRNA. In the 70S ribosome it contacts the 23S rRNA (bridge B1a) and protein L5 of the 50S subunit (bridge B1b), connecting the 2 subunits; these bridges are implicated in subunit movement. Contacts the tRNAs in the A and P-sites. This chain is Small ribosomal subunit protein uS13, found in Halothermothrix orenii (strain H 168 / OCM 544 / DSM 9562).